We begin with the raw amino-acid sequence, 457 residues long: Bifunctional protein GlmU (457 aa).

The interval 1-230 (MSKRYAVVLA…FEESLGVNDR (230 aa)) is pyrophosphorylase. UDP-N-acetyl-alpha-D-glucosamine is bound by residues 9 to 12 (LAAG), Lys-23, Gln-73, and 78 to 79 (GT). Position 103 (Asp-103) interacts with Mg(2+). UDP-N-acetyl-alpha-D-glucosamine-binding residues include Gly-140, Glu-155, Asn-170, and Asn-228. Mg(2+) is bound at residue Asn-228. A linker region spans residues 231–251 (IALAEASRLMQRRINENHMRN). Positions 252 to 457 (GVTLVNPENT…GYAKHLNHGK (206 aa)) are N-acetyltransferase. 2 residues coordinate UDP-N-acetyl-alpha-D-glucosamine: Arg-333 and Lys-351. The active-site Proton acceptor is the His-363. UDP-N-acetyl-alpha-D-glucosamine contacts are provided by Tyr-366 and Asn-377. Acetyl-CoA is bound by residues 386 to 387 (NY), Ala-423, and Arg-440.

This sequence in the N-terminal section; belongs to the N-acetylglucosamine-1-phosphate uridyltransferase family. In the C-terminal section; belongs to the transferase hexapeptide repeat family. As to quaternary structure, homotrimer. It depends on Mg(2+) as a cofactor.

It is found in the cytoplasm. It carries out the reaction alpha-D-glucosamine 1-phosphate + acetyl-CoA = N-acetyl-alpha-D-glucosamine 1-phosphate + CoA + H(+). It catalyses the reaction N-acetyl-alpha-D-glucosamine 1-phosphate + UTP + H(+) = UDP-N-acetyl-alpha-D-glucosamine + diphosphate. It functions in the pathway nucleotide-sugar biosynthesis; UDP-N-acetyl-alpha-D-glucosamine biosynthesis; N-acetyl-alpha-D-glucosamine 1-phosphate from alpha-D-glucosamine 6-phosphate (route II): step 2/2. Its pathway is nucleotide-sugar biosynthesis; UDP-N-acetyl-alpha-D-glucosamine biosynthesis; UDP-N-acetyl-alpha-D-glucosamine from N-acetyl-alpha-D-glucosamine 1-phosphate: step 1/1. It participates in bacterial outer membrane biogenesis; LPS lipid A biosynthesis. Its function is as follows. Catalyzes the last two sequential reactions in the de novo biosynthetic pathway for UDP-N-acetylglucosamine (UDP-GlcNAc). The C-terminal domain catalyzes the transfer of acetyl group from acetyl coenzyme A to glucosamine-1-phosphate (GlcN-1-P) to produce N-acetylglucosamine-1-phosphate (GlcNAc-1-P), which is converted into UDP-GlcNAc by the transfer of uridine 5-monophosphate (from uridine 5-triphosphate), a reaction catalyzed by the N-terminal domain. The chain is Bifunctional protein GlmU from Listeria monocytogenes serotype 4b (strain CLIP80459).